The chain runs to 312 residues: Glyoxylate/hydroxypyruvate reductase A (312 aa).

R227 is a catalytic residue. Catalysis depends on H275, which acts as the Proton donor.

It belongs to the D-isomer specific 2-hydroxyacid dehydrogenase family. GhrA subfamily.

It is found in the cytoplasm. The catalysed reaction is glycolate + NADP(+) = glyoxylate + NADPH + H(+). It catalyses the reaction (R)-glycerate + NAD(+) = 3-hydroxypyruvate + NADH + H(+). The enzyme catalyses (R)-glycerate + NADP(+) = 3-hydroxypyruvate + NADPH + H(+). Its function is as follows. Catalyzes the NADPH-dependent reduction of glyoxylate and hydroxypyruvate into glycolate and glycerate, respectively. The protein is Glyoxylate/hydroxypyruvate reductase A of Escherichia coli O127:H6 (strain E2348/69 / EPEC).